Consider the following 333-residue polypeptide: MSWIKEGELSLWERFCANIIKAGPMPKHIAFIMDGNRRYAKKCQVERQEGHSQGFNKLAETLRWCLNLGILEVTVYAFSIENFKRSKSEVDGLMDLARQKFSRLMEEKEKLQKHGVCIRVLGDLHLLPLDLQELIAQAVQATKNYNKCFLNVCFAYTSRHEISNAVREMAWGVEQGLLDPSDISESLLDKCLYTNRSPHPDILIRTSGEVRLSDFLLWQTSHSCLVFQPVLWPEYTFWNLFEAILQFQMNHSVLQKARDMYAEERKRQQLERDQATVTEQLLREGLQASGDAQLRRTRLHKLSARREERVQGFLQALELKRADWLARLGTASA.

Positions 34, 35, 37, 38, and 85 each coordinate (2E,6E)-farnesyl diphosphate. Residues Asp-34, Gly-35, Arg-37, Arg-38, Arg-85, Arg-205, Arg-211, and Ser-213 each coordinate isopentenyl diphosphate. Asp-34 is a Mg(2+) binding site.

The protein belongs to the UPP synthase family. As to quaternary structure, the active dehydrodolichyl diphosphate synthase complex is a heterotetramer composed of a dimer of heterodimer of DHDDS and NUS1. Interacts with NPC2. The cofactor is Mg(2+). As to expression, ubiquitous. Expressed at high levels in testis and kidney. Expressed in epididymis (at protein level).

It is found in the endoplasmic reticulum membrane. It catalyses the reaction n isopentenyl diphosphate + (2E,6E)-farnesyl diphosphate = a di-trans,poly-cis-polyprenyl diphosphate + n diphosphate. It functions in the pathway protein modification; protein glycosylation. Its pathway is lipid metabolism. With respect to regulation, activated by phospholipids including cardiolipin, phosphatidylcholine, phosphatidylethanolamine, phosphatidylinositol and phosphatidylserine. Functionally, with NUS1, forms the dehydrodolichyl diphosphate synthase (DDS) complex, an essential component of the dolichol monophosphate (Dol-P) biosynthetic machinery. Both subunits contribute to enzymatic activity, i.e. condensation of multiple copies of isopentenyl pyrophosphate (IPP) to farnesyl pyrophosphate (FPP) to produce dehydrodolichyl diphosphate (Dedol-PP), a precursor of dolichol phosphate which is utilized as a sugar carrier in protein glycosylation in the endoplasmic reticulum (ER). Synthesizes long-chain polyprenols, mostly of C95 and C100 chain length. Regulates the glycosylation and stability of nascent NPC2, thereby promoting trafficking of LDL-derived cholesterol. This is Dehydrodolichyl diphosphate synthase complex subunit DHDDS from Homo sapiens (Human).